The primary structure comprises 671 residues: Amidase chry2 (671 aa).

Cys2 (nucleophile) is an active-site residue. The region spanning 2-220 (CGISAFITHP…PGHYLICRPN (219 aa)) is the Glutamine amidotransferase type-2 domain. The Asparagine synthetase domain maps to 251 to 639 (VRERLLEAVR…TQDAMDGAFN (389 aa)).

It belongs to the asparagine synthetase family.

It participates in pigment biosynthesis. Its function is as follows. Amidase; part of the gene cluster that mediates the biosynthesis of the yellow pigment chrysogine. Pyruvic acid and anthranilic acid are likely substrates for the nonribosomal peptide synthetase chry1/NRPS14, with pyruvic acid adenylated by the first A domain and anthranilic acid by the second. If pyruvic acid and anthranilic acid are merged and released from chry1/NRPS14 by hydrolysis, a subsequent amidation would lead to 2-pyruvoylaminobenzamide. This process is probably catalyzed by the amidotransferase chry2 using glutamine as amino donor. The dehydrogenase chry5 that has a terminal berberine bridge domain for C-N cyclization could catalyze the cyclization of 2-pyruvoylaminobenzamide to yield acetyl-4(3H)-quinazolidinone. A final reduction of acetyl-4(3H)-quinazolidinone catalyzed by the oxidoreductase chry4 would result in chrysogine. The polypeptide is Amidase chry2 (Gibberella zeae (strain ATCC MYA-4620 / CBS 123657 / FGSC 9075 / NRRL 31084 / PH-1) (Wheat head blight fungus)).